A 271-amino-acid chain; its full sequence is Ribosomal RNA small subunit methyltransferase A (271 aa).

Residues Asn-28, Leu-30, Gly-54, Glu-75, Asp-99, and Asn-117 each coordinate S-adenosyl-L-methionine.

It belongs to the class I-like SAM-binding methyltransferase superfamily. rRNA adenine N(6)-methyltransferase family. RsmA subfamily.

Its subcellular location is the cytoplasm. It carries out the reaction adenosine(1518)/adenosine(1519) in 16S rRNA + 4 S-adenosyl-L-methionine = N(6)-dimethyladenosine(1518)/N(6)-dimethyladenosine(1519) in 16S rRNA + 4 S-adenosyl-L-homocysteine + 4 H(+). In terms of biological role, specifically dimethylates two adjacent adenosines (A1518 and A1519) in the loop of a conserved hairpin near the 3'-end of 16S rRNA in the 30S particle. May play a critical role in biogenesis of 30S subunits. This chain is Ribosomal RNA small subunit methyltransferase A, found in Thermus thermophilus (strain ATCC 27634 / DSM 579 / HB8).